Reading from the N-terminus, the 475-residue chain is Alpha,alpha-trehalose-phosphate synthase [UDP-forming] (475 aa).

Residues Tyr-93 and Asp-147 each coordinate D-glucose 6-phosphate. Positions 285 and 290 each coordinate UDP. 2 residues coordinate UDP-alpha-D-glucose: Arg-285 and Lys-290. Position 323 (Arg-323) interacts with D-glucose 6-phosphate. Asp-384 to Glu-392 contacts UDP-alpha-D-glucose. Leu-388–Glu-392 lines the UDP pocket.

The protein belongs to the glycosyltransferase 20 family.

The enzyme catalyses D-glucose 6-phosphate + UDP-alpha-D-glucose = alpha,alpha-trehalose 6-phosphate + UDP + H(+). Its pathway is carbohydrate biosynthesis. Synthase catalytic subunit of the trehalose synthase complex that catalyzes the production of trehalose from glucose-6-phosphate and UDP-alpha-D-glucose in a two step process. In Pichia angusta (Yeast), this protein is Alpha,alpha-trehalose-phosphate synthase [UDP-forming].